A 132-amino-acid chain; its full sequence is Acyl carrier protein 3, chloroplastic (132 aa).

A chloroplast-targeting transit peptide spans 1-49; it reads MASIAGSAVSFAKPVKAINTNSLSFSGARRGNAFLRLQPVPMRFAVCCS. The 76-residue stretch at 52-127 folds into the Carrier domain; it reads QDTVEKVCEI…DAATLIDKLV (76 aa). Position 87 is an O-(pantetheine 4'-phosphoryl)serine (serine 87).

It belongs to the acyl carrier protein (ACP) family. Post-translationally, 4'-phosphopantetheine is transferred from CoA to a specific serine of apo-ACP by acpS. This modification is essential for activity because fatty acids are bound in thioester linkage to the sulfhydryl of the prosthetic group.

The protein resides in the plastid. Its subcellular location is the chloroplast. It functions in the pathway lipid metabolism; fatty acid biosynthesis. Functionally, carrier of the growing fatty acid chain in fatty acid biosynthesis. The protein is Acyl carrier protein 3, chloroplastic (ACL1.3) of Hordeum vulgare (Barley).